The sequence spans 3391 residues: Genome polyprotein (3391 aa).

The interaction with host EXOC1 stretch occupies residues 1-15 (MNNQRKKARSTPFNM). At 1-101 (MNNQRKKARS…LNILNRRRRT (101 aa)) the chain is on the cytoplasmic side. Positions 37 to 72 (MLQGRGPLKLFMALVAFLRFLTIPPTAGILKRWGTI) are hydrophobic; homodimerization of capsid protein C. A propeptide spans 101–114 (TAGVIIMLIPTAMA) (ER anchor for the capsid protein C, removed in mature form by serine protease NS3). The helical transmembrane segment at 102 to 119 (AGVIIMLIPTAMAFHLTT) threads the bilayer. The Extracellular portion of the chain corresponds to 120 to 241 (RNGEPHMIVG…KHVQRIETWI (122 aa)). Residue Asn183 is glycosylated (N-linked (GlcNAc...) asparagine; by host). A helical membrane pass occupies residues 242–259 (LRHPGFTIMAAILAYTIG). Residues 260–265 (TTHFQR) are Cytoplasmic-facing. The chain crosses the membrane as a helical span at residues 266–280 (ALIFILLTAVAPSMT). At 281-725 (MRCIGISNRD…LHQVFGAIYG (445 aa)) the chain is on the extracellular side. Intrachain disulfides connect Cys283–Cys310, Cys340–Cys401, Cys354–Cys385, and Cys372–Cys396. N-linked (GlcNAc...) asparagine; by host glycosylation occurs at Asn347. The interval 378–391 (DRGWGNGCGLFGKG) is fusion peptide. An N-linked (GlcNAc...) asparagine; by host glycan is attached at Asn433. 2 disulfide bridges follow: Cys465–Cys565 and Cys582–Cys613. A helical membrane pass occupies residues 726–746 (AAFSGVSWTMKILIGVIITWI). Residues 747-752 (GMNSRS) are Cytoplasmic-facing. Residues 753-773 (TSLSVSLVLVGVVTLYLGAMV) form a helical membrane-spanning segment. Topologically, residues 774-1195 (QADSGCVVSW…MVGATMTDDI (422 aa)) are extracellular. Cystine bridges form between Cys779-Cys790, Cys830-Cys918, Cys954-Cys998, Cys1055-Cys1104, Cys1066-Cys1088, and Cys1087-Cys1091. N-linked (GlcNAc...) asparagine; by host glycosylation is found at Asn905 and Asn982. The N-linked (GlcNAc...) asparagine; by host glycan is linked to Asn1134. Residues 1196–1220 (GMGVTYLALLAAFKVRPTFAAGLLL) form a helical membrane-spanning segment. Residues 1221 to 1226 (RKLTSK) lie on the Cytoplasmic side of the membrane. Residues 1227–1245 (ELMMATIGIALLSQSTIPE) traverse the membrane as a helical segment. The Lumenal portion of the chain corresponds to 1246–1269 (TILELTDALALGMMVLKIVRNMEK). The helical transmembrane segment at 1270 to 1290 (YQLAVTIMAILCVPNAVILQN) threads the bilayer. A topological domain (cytoplasmic) is located at residue Ala1291. The chain crosses the membrane as a helical span at residues 1292–1310 (WKVSCTILAAVSVSPLLLT). The Lumenal segment spans residues 1311–1317 (SSQQKAD). The helical transmembrane segment at 1318-1338 (WIPLALTIKGLNPTAIFLTTL) threads the bilayer. Over 1339 to 1346 (SRTSKKRS) the chain is Cytoplasmic. Residues 1347-1367 (WPLNEAIMAVGMVSILASSLL) form a helical membrane-spanning segment. Topologically, residues 1368 to 1370 (KND) are lumenal. A helical membrane pass occupies residues 1371-1391 (IPMTGPLVAGGLLTVCYVLTG). The Cytoplasmic portion of the chain corresponds to 1392-1447 (RSADLELERAADVKWEDQAEISGSSPILSITISEDGSMSIKNEEEEQTLTILIRTG). The interacts with and activates NS3 protease stretch occupies residues 1398 to 1437 (LERAADVKWEDQAEISGSSPILSITISEDGSMSIKNEEEE). An intramembrane region (helical) is located at residues 1448–1468 (LLVISGVFPVSIPITAAAWYL). At 1469-2147 (WEVKKQRAGV…LSELPETLET (679 aa)) the chain is on the cytoplasmic side. One can recognise a Peptidase S7 domain in the interval 1476–1653 (AGVLWDVPSP…EKSIEDNPEI (178 aa)). Catalysis depends on charge relay system; for serine protease NS3 activity residues His1526, Asp1550, and Ser1610. The region spanning 1655–1811 (DDIFRKKRLT…QSNAPIMDEE (157 aa)) is the Helicase ATP-binding domain. The tract at residues 1659 to 1662 (RKKR) is important for RNA-binding. Residue 1668–1675 (LHPGAGKT) participates in ATP binding. The short motif at 1759–1762 (DEAH) is the DEAH box element. A Helicase C-terminal domain is found at 1821–1988 (SGHEWVTDFK…IIPSMFEPER (168 aa)). Lys1863 carries the post-translational modification N6-acetyllysine; by host. The helical transmembrane segment at 2148–2168 (LLLLTLLATVTGGIFLFLMSG) threads the bilayer. At 2169 to 2170 (KG) the chain is on the lumenal side. An intramembrane region (helical) is located at residues 2171–2191 (IGKMTLGMCCIITASILLWYA). Gln2192 is a topological domain (lumenal). Residues 2193–2213 (IQPHWIAASIILEFFLIVLLI) form a helical membrane-spanning segment. At 2214–2228 (PEPEKQRTPQDNQLT) the chain is on the cytoplasmic side. The chain crosses the membrane as a helical span at residues 2229–2249 (YVVIAILTVVAATMANEMGFL). Topologically, residues 2250–2274 (EKTKKDLGLGSITTQESESNILDID) are lumenal. The segment at residues 2275–2295 (LRPASAWTLYAVATTFVTPML) is an intramembrane region (helical). Residues 2296-2316 (RHSIENSSVNVSLTAIANQAT) are Lumenal-facing. N-linked (GlcNAc...) asparagine; by host glycans are attached at residues Asn2301 and Asn2305. The helical intramembrane region spans 2317–2337 (VLMGLGKGWPLSKIHIGVPLL). Residues 2338–2347 (AIGCYSQVNP) are Lumenal-facing. The chain crosses the membrane as a helical span at residues 2348–2368 (ITLTAALLLLVAHYAIIGPGL). Residues 2369-2413 (QAKATREAQKRAAAGIMKNPTVDGITVIDLDPIPYDPKFEKQLGQ) lie on the Cytoplasmic side of the membrane. Residues 2414 to 2434 (VMLLILCVTQVLMMRTTWALC) form a helical membrane-spanning segment. Over 2435–2459 (EALTLATGPISTLWEGNPGRFWNTT) the chain is Lumenal. A glycan (N-linked (GlcNAc...) asparagine; by host) is linked at Asn2457. A helical membrane pass occupies residues 2460-2480 (IAVSMANIFRGSYLAGAGLLF). The Cytoplasmic portion of the chain corresponds to 2481–3391 (SIMKNTTNTR…REEEEAGVLW (911 aa)). Residues 2493-2755 (TGNIGETLGE…DVDLGSGTRN (263 aa)) enclose the mRNA cap 0-1 NS5-type MT domain. Ser2547 is a binding site for S-adenosyl-L-methionine. Ser2547 carries the phosphoserine modification. Lys2552 functions as the For 2'-O-MTase activity in the catalytic mechanism. The SUMO-interacting motif motif lies at 2568–2571 (VVDL). S-adenosyl-L-methionine contacts are provided by Gly2577, Trp2578, Thr2595, Lys2596, Asp2622, and Val2623. Residue Asp2637 is the For 2'-O-MTase activity of the active site. Position 2638 (Ile2638) interacts with S-adenosyl-L-methionine. Residues Lys2672 and Glu2708 each act as for 2'-O-MTase activity in the active site. Position 2710 (Tyr2710) interacts with S-adenosyl-L-methionine. Zn(2+) contacts are provided by Glu2929, His2933, Cys2938, and Cys2941. Residues 3020–3169 (AMYADDTAGW…PLDDRFASAL (150 aa)) form the RdRp catalytic domain. Residues His3203, Cys3219, and Cys3338 each coordinate Zn(2+).

In the N-terminal section; belongs to the class I-like SAM-binding methyltransferase superfamily. mRNA cap 0-1 NS5-type methyltransferase family. In terms of assembly, homodimer. Interacts (via N-terminus) with host EXOC1 (via C-terminus); this interaction results in EXOC1 degradation through the proteasome degradation pathway. Forms heterodimers with envelope protein E in the endoplasmic reticulum and Golgi. As to quaternary structure, homodimer; in the endoplasmic reticulum and Golgi. Interacts with protein prM. Interacts with non-structural protein 1. In terms of assembly, homodimer; Homohexamer when secreted. Interacts with envelope protein E. Interacts with host PRKAA1. Interacts (via N-terminus) with serine protease NS3. As to quaternary structure, forms a heterodimer with serine protease NS3. May form homooligomers. In terms of assembly, forms a heterodimer with NS2B. Interacts with NS4B. Interacts with unphosphorylated RNA-directed RNA polymerase NS5; this interaction stimulates RNA-directed RNA polymerase NS5 guanylyltransferase activity. Interacts with host SHFL. Interacts with host MAVS; this interaction inhibits the synthesis of IFN-beta. Interacts with host SHFL. Interacts with host AUP1; the interaction occurs in the presence of Dengue virus NS4B and induces lipophagy which facilitates production of virus progeny particles. May interact with host SRPRA and SEC61G. As to quaternary structure, interacts with serine protease NS3. In terms of assembly, homodimer. Interacts with host STAT2; this interaction inhibits the phosphorylation of the latter, and, when all viral proteins are present (polyprotein), targets STAT2 for degradation. Interacts with serine protease NS3. Interacts with host PAF1 complex; the interaction may prevent the recruitment of the PAF1 complex to interferon-responsive genes, and thus reduces the immune response. Post-translationally, specific enzymatic cleavages in vivo yield mature proteins. Cleavages in the lumen of endoplasmic reticulum are performed by host signal peptidase, whereas cleavages in the cytoplasmic side are performed by serine protease NS3. Signal cleavage at the 2K-4B site requires a prior NS3 protease-mediated cleavage at the 4A-2K site. In terms of processing, cleaved in post-Golgi vesicles by a host furin, releasing the mature small envelope protein M, and peptide pr. This cleavage is incomplete as up to 30% of viral particles still carry uncleaved prM. N-glycosylated. Post-translationally, N-glycosylated. The excreted form is glycosylated and this is required for efficient secretion of the protein from infected cells. In terms of processing, acetylated by host KAT5. Acetylation modulates NS3 RNA-binding and unwinding activities and plays an important positive role for viral replication. Sumoylation of RNA-directed RNA polymerase NS5 increases NS5 protein stability allowing proper viral RNA replication. Post-translationally, phosphorylated on serines residues. This phosphorylation may trigger NS5 nuclear localization.

The protein resides in the virion. Its subcellular location is the host nucleus. It localises to the host cytoplasm. It is found in the host perinuclear region. The protein localises to the secreted. The protein resides in the virion membrane. Its subcellular location is the host endoplasmic reticulum membrane. It localises to the host mitochondrion. The enzyme catalyses Selective hydrolysis of -Xaa-Xaa-|-Yaa- bonds in which each of the Xaa can be either Arg or Lys and Yaa can be either Ser or Ala.. The catalysed reaction is RNA(n) + a ribonucleoside 5'-triphosphate = RNA(n+1) + diphosphate. It catalyses the reaction a ribonucleoside 5'-triphosphate + H2O = a ribonucleoside 5'-diphosphate + phosphate + H(+). It carries out the reaction ATP + H2O = ADP + phosphate + H(+). The enzyme catalyses a 5'-end (5'-triphosphoguanosine)-ribonucleoside in mRNA + S-adenosyl-L-methionine = a 5'-end (N(7)-methyl 5'-triphosphoguanosine)-ribonucleoside in mRNA + S-adenosyl-L-homocysteine. The catalysed reaction is a 5'-end (N(7)-methyl 5'-triphosphoguanosine)-ribonucleoside in mRNA + S-adenosyl-L-methionine = a 5'-end (N(7)-methyl 5'-triphosphoguanosine)-(2'-O-methyl-ribonucleoside) in mRNA + S-adenosyl-L-homocysteine + H(+). Plays a role in virus budding by binding to the cell membrane and gathering the viral RNA into a nucleocapsid that forms the core of a mature virus particle. During virus entry, may induce genome penetration into the host cytoplasm after hemifusion induced by the surface proteins. Can migrate to the cell nucleus where it modulates host functions. Overcomes the anti-viral effects of host EXOC1 by sequestering and degrading the latter through the proteasome degradation pathway. Its function is as follows. Inhibits RNA silencing by interfering with host Dicer. In terms of biological role, prevents premature fusion activity of envelope proteins in trans-Golgi by binding to envelope protein E at pH6.0. After virion release in extracellular space, gets dissociated from E dimers. Functionally, acts as a chaperone for envelope protein E during intracellular virion assembly by masking and inactivating envelope protein E fusion peptide. prM is the only viral peptide matured by host furin in the trans-Golgi network probably to avoid catastrophic activation of the viral fusion activity in acidic Golgi compartment prior to virion release. prM-E cleavage is inefficient, and many virions are only partially matured. These uncleaved prM would play a role in immune evasion. May play a role in virus budding. Exerts cytotoxic effects by activating a mitochondrial apoptotic pathway through M ectodomain. May display a viroporin activity. Its function is as follows. Binds to host cell surface receptor and mediates fusion between viral and cellular membranes. Envelope protein is synthesized in the endoplasmic reticulum in the form of heterodimer with protein prM. They play a role in virion budding in the ER, and the newly formed immature particle is covered with 60 spikes composed of heterodimer between precursor prM and envelope protein E. The virion is transported to the Golgi apparatus where the low pH causes dissociation of PrM-E heterodimers and formation of E homodimers. prM-E cleavage is inefficient, and many virions are only partially matured. These uncleaved prM would play a role in immune evasion. In terms of biological role, involved in immune evasion, pathogenesis and viral replication. Once cleaved off the polyprotein, is targeted to three destinations: the viral replication cycle, the plasma membrane and the extracellular compartment. Essential for viral replication. Required for formation of the replication complex and recruitment of other non-structural proteins to the ER-derived membrane structures. Excreted as a hexameric lipoparticle that plays a role against host immune response. Antagonizing the complement function. Binds to the host macrophages and dendritic cells. Inhibits signal transduction originating from Toll-like receptor 3 (TLR3). Functionally, involved in immune evasion, pathogenesis and viral replication. Once cleaved off the polyprotein, is targeted to three destinations: the viral replication cycle, the plasma membrane and the extracellular compartment. Essential for viral replication. Required for formation of the replication complex and recruitment of other non-structural proteins to the ER-derived membrane structures. Excreted as a hexameric lipoparticle that plays a role against host immune response. Antagonizing the complement function. Binds to the host macrophages and dendritic cells. Inhibits signal transduction originating from Toll-like receptor 3 (TLR3). Mediates complement activation, which may contribute to the pathogenesis of the vascular leakage that occurs in severe dengue disease. Activates autophagy through the AMPK/ERK/mTOR signaling pathway. Mechanistically, acts as the assembly platform for STK11-AMPK interactions and promotes STK11-AMPK interactions. In turn, promotes phosphorylation of the AMPK kinase structural domain and activates AMPK, thereby positively regulating the AMPK/ERK/mTOR signaling pathway and inducing autophagy. Component of the viral RNA replication complex that functions in virion assembly and antagonizes the host immune response. Its function is as follows. Required cofactor for the serine protease function of NS3. May have membrane-destabilizing activity and form viroporins. In terms of biological role, displays three enzymatic activities: serine protease, NTPase and RNA helicase. NS3 serine protease, in association with NS2B, performs its autocleavage and cleaves the polyprotein at dibasic sites in the cytoplasm: C-prM, NS2A-NS2B, NS2B-NS3, NS3-NS4A, NS4A-2K and NS4B-NS5. NS3 RNA helicase binds RNA and unwinds dsRNA in the 3' to 5' direction. Functionally, regulates the ATPase activity of the NS3 helicase activity. NS4A allows NS3 helicase to conserve energy during unwinding. Plays a role in the inhibition of the host innate immune response. Interacts with host MAVS and thereby prevents the interaction between RIGI and MAVS. In turn, IFN-beta production is impaired. Interacts with host AUP1 which mediates induction of lipophagy in host cells and facilitates production of virus progeny particles. Functions as a signal peptide for NS4B and is required for the interferon antagonism activity of the latter. Its function is as follows. Induces the formation of ER-derived membrane vesicles where the viral replication takes place. Inhibits interferon (IFN)-induced host STAT1 phosphorylation and nuclear translocation, thereby preventing the establishment of cellular antiviral state by blocking the IFN-alpha/beta pathway. In terms of biological role, replicates the viral (+) and (-) RNA genome, and performs the capping of genomes in the cytoplasm. NS5 methylates viral RNA cap at guanine N-7 and ribose 2'-O positions. Besides its role in RNA genome replication, also prevents the establishment of cellular antiviral state by blocking the interferon-alpha/beta (IFN-alpha/beta) signaling pathway. Inhibits host TYK2 and STAT2 phosphorylation, thereby preventing activation of JAK-STAT signaling pathway. May reduce immune responses by preventing the recruitment of the host PAF1 complex to interferon-responsive genes. The sequence is that of Genome polyprotein from Dengue virus type 2 (strain Jamaica/1409/1983) (DENV-2).